We begin with the raw amino-acid sequence, 279 residues long: Isopentenyl-diphosphate delta-isomerase idi1 (279 aa).

Lys-78 lines the substrate pocket. His-82 and His-93 together coordinate Mg(2+). Positions 91-249 constitute a Nudix hydrolase domain; that stretch reads LLHRAFSVFL…GLKFTPWFKL (159 aa). Positions 111 and 116 each coordinate substrate. Cys-128 is a catalytic residue. Ser-129 is a binding site for substrate. The Nudix box motif lies at 129-162; that stretch reads SHPLGIPGETGAELDAAVLGVKRAAQRKLDQELG. Glu-191 and Glu-193 together coordinate Mg(2+). The active site involves Glu-193.

It belongs to the IPP isomerase type 1 family. The cofactor is Mg(2+).

The catalysed reaction is isopentenyl diphosphate = dimethylallyl diphosphate. The protein operates within isoprenoid biosynthesis; dimethylallyl diphosphate biosynthesis; dimethylallyl diphosphate from isopentenyl diphosphate: step 1/1. In terms of biological role, isopentenyl-diphosphate delta-isomerase; part of the second module of ergosterol biosynthesis pathway that includes the middle steps of the pathway. Idi1 catalyzes the 1,3-allylic rearrangement of isopentenyl (IPP) to its highly electrophilic allylic isomer, dimethylallyl diphosphate (DMAPP). The second module is carried out in the vacuole and involves the formation of farnesyl diphosphate, which is also an important intermediate in the biosynthesis of ubiquinone, dolichol, heme and prenylated proteins. Activity by the mevalonate kinase erg12 (AFUA_4G07780) first converts mevalonate into 5-phosphomevalonate. 5-phosphomevalonate is then further converted to 5-diphosphomevalonate by the phosphomevalonate kinase erg8 (AFUA_5G10680). The diphosphomevalonate decarboxylase mvd1 (AFUA_4G07130) then produces isopentenyl diphosphate. The isopentenyl-diphosphate delta-isomerase idi1 (AFUA_6G11160) then catalyzes the 1,3-allylic rearrangement of the homoallylic substrate isopentenyl (IPP) to its highly electrophilic allylic isomer, dimethylallyl diphosphate (DMAPP). Finally the farnesyl diphosphate synthase erg20 (AFUA_5G02450) catalyzes the sequential condensation of isopentenyl pyrophosphate with dimethylallyl pyrophosphate, and then with the resultant geranylpyrophosphate to the ultimate product farnesyl pyrophosphate. The chain is Isopentenyl-diphosphate delta-isomerase idi1 from Aspergillus fumigatus (strain ATCC MYA-4609 / CBS 101355 / FGSC A1100 / Af293) (Neosartorya fumigata).